The following is a 394-amino-acid chain: Phosphoglycerate kinase (394 aa).

Substrate-binding positions include 21–23 (DLN), R37, 60–63 (HLGR), R115, and R148. ATP is bound by residues K199, E321, and 347-350 (GGDT).

Belongs to the phosphoglycerate kinase family. In terms of assembly, monomer.

The protein localises to the cytoplasm. It carries out the reaction (2R)-3-phosphoglycerate + ATP = (2R)-3-phospho-glyceroyl phosphate + ADP. Its pathway is carbohydrate degradation; glycolysis; pyruvate from D-glyceraldehyde 3-phosphate: step 2/5. This chain is Phosphoglycerate kinase, found in Azoarcus sp. (strain BH72).